We begin with the raw amino-acid sequence, 200 residues long: Large ribosomal subunit protein uL4 (200 aa).

The segment at 43-71 (RAQKTRAEVSGSGKKPWRQKGTGRARSGD) is disordered.

This sequence belongs to the universal ribosomal protein uL4 family. In terms of assembly, part of the 50S ribosomal subunit.

Its function is as follows. One of the primary rRNA binding proteins, this protein initially binds near the 5'-end of the 23S rRNA. It is important during the early stages of 50S assembly. It makes multiple contacts with different domains of the 23S rRNA in the assembled 50S subunit and ribosome. In terms of biological role, forms part of the polypeptide exit tunnel. This is Large ribosomal subunit protein uL4 from Mannheimia succiniciproducens (strain KCTC 0769BP / MBEL55E).